The following is a 180-amino-acid chain: NAD(P)H-quinone oxidoreductase subunit I, chloroplastic (180 aa).

2 consecutive 4Fe-4S ferredoxin-type domains span residues 55–84 (GRIH…VDWR) and 95–124 (LNYS…MTEE). Residues Cys-64, Cys-67, Cys-70, Cys-74, Cys-104, Cys-107, Cys-110, and Cys-114 each coordinate [4Fe-4S] cluster.

This sequence belongs to the complex I 23 kDa subunit family. NDH is composed of at least 16 different subunits, 5 of which are encoded in the nucleus. [4Fe-4S] cluster serves as cofactor.

It is found in the plastid. Its subcellular location is the chloroplast thylakoid membrane. The enzyme catalyses a plastoquinone + NADH + (n+1) H(+)(in) = a plastoquinol + NAD(+) + n H(+)(out). It carries out the reaction a plastoquinone + NADPH + (n+1) H(+)(in) = a plastoquinol + NADP(+) + n H(+)(out). NDH shuttles electrons from NAD(P)H:plastoquinone, via FMN and iron-sulfur (Fe-S) centers, to quinones in the photosynthetic chain and possibly in a chloroplast respiratory chain. The immediate electron acceptor for the enzyme in this species is believed to be plastoquinone. Couples the redox reaction to proton translocation, and thus conserves the redox energy in a proton gradient. The chain is NAD(P)H-quinone oxidoreductase subunit I, chloroplastic from Oryza nivara (Indian wild rice).